The following is a 394-amino-acid chain: S-adenosylmethionine synthase (394 aa).

Position 18 (His-18) interacts with ATP. Asp-20 is a binding site for Mg(2+). Glu-46 lines the K(+) pocket. The L-methionine site is built by Glu-59 and Gln-102. The tract at residues 102 to 112 (QSPDIDMGVSA) is flexible loop. ATP contacts are provided by residues 175–177 (DGK), Asp-250, 256–257 (RK), Ala-273, and Lys-277. Asp-250 lines the L-methionine pocket. Lys-281 is an L-methionine binding site.

It belongs to the AdoMet synthase family. As to quaternary structure, homotetramer; dimer of dimers. Mg(2+) is required as a cofactor. It depends on K(+) as a cofactor.

Its subcellular location is the cytoplasm. It catalyses the reaction L-methionine + ATP + H2O = S-adenosyl-L-methionine + phosphate + diphosphate. The protein operates within amino-acid biosynthesis; S-adenosyl-L-methionine biosynthesis; S-adenosyl-L-methionine from L-methionine: step 1/1. Functionally, catalyzes the formation of S-adenosylmethionine (AdoMet) from methionine and ATP. The overall synthetic reaction is composed of two sequential steps, AdoMet formation and the subsequent tripolyphosphate hydrolysis which occurs prior to release of AdoMet from the enzyme. The protein is S-adenosylmethionine synthase of Brachyspira hyodysenteriae (strain ATCC 49526 / WA1).